A 318-amino-acid polypeptide reads, in one-letter code: 4-hydroxy-3-methylbut-2-enyl diphosphate reductase (318 aa).

Residue cysteine 12 participates in [4Fe-4S] cluster binding. (2E)-4-hydroxy-3-methylbut-2-enyl diphosphate-binding residues include histidine 41 and histidine 74. Positions 41 and 74 each coordinate dimethylallyl diphosphate. Histidine 41 and histidine 74 together coordinate isopentenyl diphosphate. Cysteine 96 provides a ligand contact to [4Fe-4S] cluster. Histidine 124 lines the (2E)-4-hydroxy-3-methylbut-2-enyl diphosphate pocket. Dimethylallyl diphosphate is bound at residue histidine 124. Histidine 124 is an isopentenyl diphosphate binding site. Glutamate 126 (proton donor) is an active-site residue. Position 168 (threonine 168) interacts with (2E)-4-hydroxy-3-methylbut-2-enyl diphosphate. Position 198 (cysteine 198) interacts with [4Fe-4S] cluster. (2E)-4-hydroxy-3-methylbut-2-enyl diphosphate-binding residues include serine 226, serine 227, asparagine 228, and serine 270. The dimethylallyl diphosphate site is built by serine 226, serine 227, asparagine 228, and serine 270. Isopentenyl diphosphate-binding residues include serine 226, serine 227, asparagine 228, and serine 270.

Belongs to the IspH family. The cofactor is [4Fe-4S] cluster.

It carries out the reaction isopentenyl diphosphate + 2 oxidized [2Fe-2S]-[ferredoxin] + H2O = (2E)-4-hydroxy-3-methylbut-2-enyl diphosphate + 2 reduced [2Fe-2S]-[ferredoxin] + 2 H(+). The catalysed reaction is dimethylallyl diphosphate + 2 oxidized [2Fe-2S]-[ferredoxin] + H2O = (2E)-4-hydroxy-3-methylbut-2-enyl diphosphate + 2 reduced [2Fe-2S]-[ferredoxin] + 2 H(+). The protein operates within isoprenoid biosynthesis; dimethylallyl diphosphate biosynthesis; dimethylallyl diphosphate from (2E)-4-hydroxy-3-methylbutenyl diphosphate: step 1/1. It functions in the pathway isoprenoid biosynthesis; isopentenyl diphosphate biosynthesis via DXP pathway; isopentenyl diphosphate from 1-deoxy-D-xylulose 5-phosphate: step 6/6. Functionally, catalyzes the conversion of 1-hydroxy-2-methyl-2-(E)-butenyl 4-diphosphate (HMBPP) into a mixture of isopentenyl diphosphate (IPP) and dimethylallyl diphosphate (DMAPP). Acts in the terminal step of the DOXP/MEP pathway for isoprenoid precursor biosynthesis. This is 4-hydroxy-3-methylbut-2-enyl diphosphate reductase from Psychrobacter sp. (strain PRwf-1).